The primary structure comprises 297 residues: MAAWVPCRKWGWAAVSFGRHRGLIASLARKPPWAWWLSACRQKTTLSFLKRPELPSLAYKRLKGKNPGIIFIPGYLSNMNGKKAVAIEEFCKSIGHAFIRFDYSGVGSSDGNLAECSVGKWRKDVLSILDDIAEGPQILVGSSLGGWLMLHAAIARPEKVIALIGIASATDGVVTQFHSLPVEMQKEIEMKGEWSLPSKYNKEGYYSIPYSFIKEAAHHCLLHSPIPVTCPVRLLHGMKDEIVPWHRSLQVADRVVSPDVDVILRKHSDHRMKETADIHLLICTIDDLIDKLSTVTH.

Residues 1-43 (MAAWVPCRKWGWAAVSFGRHRGLIASLARKPPWAWWLSACRQK) constitute a mitochondrion transit peptide. One can recognise an AB hydrolase-1 domain in the interval 69–181 (IIFIPGYLSN…GVVTQFHSLP (113 aa)). Residues Ser143, Asp240, and His270 each act as charge relay system in the active site.

The protein belongs to the AB hydrolase superfamily. In terms of tissue distribution, expressed in epididymal sperm but not in testicular sperm (at protein level).

Its subcellular location is the mitochondrion. It carries out the reaction S-hexadecanoyl-L-cysteinyl-[protein] + H2O = L-cysteinyl-[protein] + hexadecanoate + H(+). The catalysed reaction is mycophenolic acid O-acyl-beta-D-glucuronide + H2O = mycophenolate + D-glucuronate + H(+). With respect to regulation, inhibited by palmostatin-B. In terms of biological role, acts as an acyl-protein thioesterase that hydrolyzes fatty acids from acylated residues in proteins. Regulates the mitochondrial S-depalmitoylation of the nucleophilic active site residue of peroxiredoxin-5/PRDX5, a key antioxidant protein, therefore modulating mitochondrial antioxidant ability. Also catalyzes the deglucuronidation of mycophenolic acid acyl-glucuronide, an active metabolite of the immunosuppressant drug mycophenolate. The sequence is that of Palmitoyl-protein thioesterase ABHD10, mitochondrial from Rattus norvegicus (Rat).